Consider the following 61-residue polypeptide: Large ribosomal subunit protein eL29 (61 aa).

Residues 1–26 (MAKSKNHTNHNQNKKAHRNGIKRPQK) show a composition bias toward basic residues. A disordered region spans residues 1–32 (MAKSKNHTNHNQNKKAHRNGIKRPQKHRYDSL).

This sequence belongs to the eukaryotic ribosomal protein eL29 family. In terms of assembly, component of the large ribosomal subunit (LSU). Mature yeast ribosomes consist of a small (40S) and a large (60S) subunit. The 40S small subunit contains 1 molecule of ribosomal RNA (18S rRNA) and at least 33 different proteins. The large 60S subunit contains 3 rRNA molecules (25S, 5.8S and 5S rRNA) and at least 46 different proteins.

The protein resides in the cytoplasm. Its subcellular location is the nucleus. It localises to the nucleolus. In terms of biological role, component of the ribosome, a large ribonucleoprotein complex responsible for the synthesis of proteins in the cell. The small ribosomal subunit (SSU) binds messenger RNAs (mRNAs) and translates the encoded message by selecting cognate aminoacyl-transfer RNA (tRNA) molecules. The large subunit (LSU) contains the ribosomal catalytic site termed the peptidyl transferase center (PTC), which catalyzes the formation of peptide bonds, thereby polymerizing the amino acids delivered by tRNAs into a polypeptide chain. The nascent polypeptides leave the ribosome through a tunnel in the LSU and interact with protein factors that function in enzymatic processing, targeting, and the membrane insertion of nascent chains at the exit of the ribosomal tunnel. This Schizosaccharomyces pombe (strain 972 / ATCC 24843) (Fission yeast) protein is Large ribosomal subunit protein eL29 (rpl29).